The following is a 208-amino-acid chain: FMN-dependent NADH:quinone oxidoreductase (208 aa).

FMN contacts are provided by residues 17–19 (SNS), 99–102 (MWNL), and 143–146 (SRGG).

The protein belongs to the azoreductase type 1 family. Homodimer. FMN is required as a cofactor.

It carries out the reaction 2 a quinone + NADH + H(+) = 2 a 1,4-benzosemiquinone + NAD(+). It catalyses the reaction N,N-dimethyl-1,4-phenylenediamine + anthranilate + 2 NAD(+) = 2-(4-dimethylaminophenyl)diazenylbenzoate + 2 NADH + 2 H(+). Quinone reductase that provides resistance to thiol-specific stress caused by electrophilic quinones. Functionally, also exhibits azoreductase activity. Catalyzes the reductive cleavage of the azo bond in aromatic azo compounds to the corresponding amines. In Staphylococcus aureus (strain MRSA252), this protein is FMN-dependent NADH:quinone oxidoreductase.